A 401-amino-acid polypeptide reads, in one-letter code: Imidazolonepropionase (401 aa).

Residues histidine 66 and histidine 68 each contribute to the Fe(3+) site. Histidine 66 and histidine 68 together coordinate Zn(2+). Positions 75, 138, and 171 each coordinate 4-imidazolone-5-propanoate. N-formimidoyl-L-glutamate is bound at residue tyrosine 138. Histidine 236 contacts Fe(3+). Position 236 (histidine 236) interacts with Zn(2+). Glutamine 239 contributes to the 4-imidazolone-5-propanoate binding site. A Fe(3+)-binding site is contributed by aspartate 311. Aspartate 311 contacts Zn(2+). N-formimidoyl-L-glutamate contacts are provided by asparagine 313 and glycine 315. Position 316 (threonine 316) interacts with 4-imidazolone-5-propanoate.

This sequence belongs to the metallo-dependent hydrolases superfamily. HutI family. Zn(2+) is required as a cofactor. Requires Fe(3+) as cofactor.

Its subcellular location is the cytoplasm. The catalysed reaction is 4-imidazolone-5-propanoate + H2O = N-formimidoyl-L-glutamate. The protein operates within amino-acid degradation; L-histidine degradation into L-glutamate; N-formimidoyl-L-glutamate from L-histidine: step 3/3. Its function is as follows. Catalyzes the hydrolytic cleavage of the carbon-nitrogen bond in imidazolone-5-propanoate to yield N-formimidoyl-L-glutamate. It is the third step in the universal histidine degradation pathway. The sequence is that of Imidazolonepropionase from Acinetobacter baumannii (strain AB307-0294).